The chain runs to 576 residues: WAP, Kazal, immunoglobulin, Kunitz and NTR domain-containing protein 2 (576 aa).

Positions 1 to 34 (MWAPRCRRFWSRWEQVAALLLLLLLLGVPPRSLA) are cleaved as a signal peptide. The region spanning 39–92 (RYSHAGICPNDMNPNLWVDAQSTCRRECETDQECETYEKCCPNVCGTKSCVAAR) is the WAP domain. Intrachain disulfides connect Cys-46-Cys-79, Cys-62-Cys-83, Cys-66-Cys-78, Cys-72-Cys-88, Cys-134-Cys-164, Cys-138-Cys-157, Cys-146-Cys-175, and Cys-231-Cys-287. In terms of domain architecture, Kazal-like spans 126 to 177 (WDGQPVCKCKDRCEKEPSFTCASDGLTYYNRCYMDAEACSKGITLAVVTCRY). One can recognise an Ig-like C2-type domain in the interval 210–303 (PALLNNPVHQ…GVLRADFPLS (94 aa)). N-linked (GlcNAc...) asparagine glycosylation is present at Asn-319. 9 disulfides stabilise this stretch: Cys-328–Cys-378, Cys-337–Cys-361, Cys-353–Cys-374, Cys-386–Cys-436, Cys-395–Cys-419, Cys-411–Cys-432, Cys-445–Cys-515, Cys-448–Cys-517, and Cys-459–Cys-566. 2 BPTI/Kunitz inhibitor domains span residues 328–378 (CLKP…MLAC) and 386–436 (CSLP…EESC). Residues 445-566 (CRACKPRQKL…LREVMHKKTC (122 aa)) enclose the NTR domain. An N-linked (GlcNAc...) asparagine glycan is attached at Asn-519.

Belongs to the WFIKKN family. As to quaternary structure, interacts with both mature and propeptide myostatin/MSTN. Primarily expressed in ovary, testis and brain, but not in liver. In fetal tissues, it is primarily expressed in brain, skeletal muscle, thymus and kidney.

It localises to the secreted. Protease-inhibitor that contains multiple distinct protease inhibitor domains. Probably has serine protease- and metalloprotease-inhibitor activity. Inhibits the biological activity of mature myostatin, but not activin. The sequence is that of WAP, Kazal, immunoglobulin, Kunitz and NTR domain-containing protein 2 (WFIKKN2) from Homo sapiens (Human).